The sequence spans 310 residues: 4-hydroxythreonine-4-phosphate dehydrogenase (310 aa).

Position 129 (Thr-129) interacts with substrate. Residues His-158, His-202, and His-250 each contribute to the a divalent metal cation site. 3 residues coordinate substrate: Lys-258, Asn-267, and Arg-276.

Belongs to the PdxA family. As to quaternary structure, homodimer. The cofactor is a divalent metal cation.

It is found in the cytoplasm. The enzyme catalyses 4-(phosphooxy)-L-threonine + NAD(+) = 3-amino-2-oxopropyl phosphate + CO2 + NADH. It functions in the pathway cofactor biosynthesis; pyridoxine 5'-phosphate biosynthesis; pyridoxine 5'-phosphate from D-erythrose 4-phosphate: step 4/5. Catalyzes the NAD(P)-dependent oxidation of 4-(phosphooxy)-L-threonine (HTP) into 2-amino-3-oxo-4-(phosphooxy)butyric acid which spontaneously decarboxylates to form 3-amino-2-oxopropyl phosphate (AHAP). In Hydrogenobaculum sp. (strain Y04AAS1), this protein is 4-hydroxythreonine-4-phosphate dehydrogenase.